Here is a 156-residue protein sequence, read N- to C-terminus: SsrA-binding protein (156 aa).

Belongs to the SmpB family.

It localises to the cytoplasm. Required for rescue of stalled ribosomes mediated by trans-translation. Binds to transfer-messenger RNA (tmRNA), required for stable association of tmRNA with ribosomes. tmRNA and SmpB together mimic tRNA shape, replacing the anticodon stem-loop with SmpB. tmRNA is encoded by the ssrA gene; the 2 termini fold to resemble tRNA(Ala) and it encodes a 'tag peptide', a short internal open reading frame. During trans-translation Ala-aminoacylated tmRNA acts like a tRNA, entering the A-site of stalled ribosomes, displacing the stalled mRNA. The ribosome then switches to translate the ORF on the tmRNA; the nascent peptide is terminated with the 'tag peptide' encoded by the tmRNA and targeted for degradation. The ribosome is freed to recommence translation, which seems to be the essential function of trans-translation. In Paracoccus denitrificans (strain Pd 1222), this protein is SsrA-binding protein.